The chain runs to 89 residues: Small ribosomal subunit protein uS15 (89 aa).

This sequence belongs to the universal ribosomal protein uS15 family. In terms of assembly, part of the 30S ribosomal subunit. Forms a bridge to the 50S subunit in the 70S ribosome, contacting the 23S rRNA.

Its function is as follows. One of the primary rRNA binding proteins, it binds directly to 16S rRNA where it helps nucleate assembly of the platform of the 30S subunit by binding and bridging several RNA helices of the 16S rRNA. Forms an intersubunit bridge (bridge B4) with the 23S rRNA of the 50S subunit in the ribosome. The polypeptide is Small ribosomal subunit protein uS15 (Actinobacillus pleuropneumoniae serotype 5b (strain L20)).